Reading from the N-terminus, the 486-residue chain is UDP-N-acetylmuramate--L-alanine ligase (486 aa).

Residue 126 to 132 (GTHGKTS) participates in ATP binding.

This sequence belongs to the MurCDEF family.

It is found in the cytoplasm. The catalysed reaction is UDP-N-acetyl-alpha-D-muramate + L-alanine + ATP = UDP-N-acetyl-alpha-D-muramoyl-L-alanine + ADP + phosphate + H(+). It participates in cell wall biogenesis; peptidoglycan biosynthesis. Cell wall formation. The protein is UDP-N-acetylmuramate--L-alanine ligase of Corynebacterium glutamicum (strain R).